We begin with the raw amino-acid sequence, 623 residues long: Serine/threonine-protein kinase MAK (623 aa).

The 281-residue stretch at 4 to 284 (YTTMRQLGDG…ASQALKHPYF (281 aa)) folds into the Protein kinase domain. ATP is bound by residues 10–18 (LGDGTYGSV) and lysine 33. The active-site Proton acceptor is aspartate 125. Residue threonine 157 is modified to Phosphothreonine; by autocatalysis. Tyrosine 159 carries the post-translational modification Phosphotyrosine; by autocatalysis. Disordered stretches follow at residues 328–396 (IDQV…RRRW) and 416–469 (GASH…SDSE). The span at 356–369 (QQPPKQQSQEKPPQ) shows a compositional bias: low complexity. Residues 446–455 (SGSNHSTGEN) are compositionally biased toward polar residues.

It belongs to the protein kinase superfamily. CMGC Ser/Thr protein kinase family. CDC2/CDKX subfamily. As to quaternary structure, interacts with RP1. Interacts with AR and CDK20. Found in a complex containing MAK, AR and NCOA3. Interacts with FZR1 (via WD repeats). Mg(2+) is required as a cofactor. Post-translationally, autophosphorylated. Phosphorylated on serine and threonine residues. As to expression, expressed in prostate cancer cell lines at generally higher levels than in normal prostate epithelial cell lines. Isoform 1 is expressed in kidney, testis, lung, trachea, and retina. Isoform 2 is retina-specific where it is expressed in rod and cone photoreceptors.

The protein resides in the nucleus. Its subcellular location is the cytoplasm. It is found in the cytoskeleton. The protein localises to the microtubule organizing center. It localises to the centrosome. The protein resides in the spindle. Its subcellular location is the midbody. It is found in the cell projection. The protein localises to the cilium. It localises to the photoreceptor outer segment. The protein resides in the photoreceptor inner segment. It catalyses the reaction L-seryl-[protein] + ATP = O-phospho-L-seryl-[protein] + ADP + H(+). The catalysed reaction is L-threonyl-[protein] + ATP = O-phospho-L-threonyl-[protein] + ADP + H(+). Its function is as follows. Essential for the regulation of ciliary length and required for the long-term survival of photoreceptors. Phosphorylates FZR1 in a cell cycle-dependent manner. Plays a role in the transcriptional coactivation of AR. Could play an important function in spermatogenesis. May play a role in chromosomal stability in prostate cancer cells. This chain is Serine/threonine-protein kinase MAK (MAK), found in Homo sapiens (Human).